We begin with the raw amino-acid sequence, 179 residues long: Large ribosomal subunit protein uL5 (179 aa).

This sequence belongs to the universal ribosomal protein uL5 family. In terms of assembly, part of the 50S ribosomal subunit; part of the 5S rRNA/L5/L18/L25 subcomplex. Contacts the 5S rRNA and the P site tRNA. Forms a bridge to the 30S subunit in the 70S ribosome.

This is one of the proteins that bind and probably mediate the attachment of the 5S RNA into the large ribosomal subunit, where it forms part of the central protuberance. In the 70S ribosome it contacts protein S13 of the 30S subunit (bridge B1b), connecting the 2 subunits; this bridge is implicated in subunit movement. Contacts the P site tRNA; the 5S rRNA and some of its associated proteins might help stabilize positioning of ribosome-bound tRNAs. In Desulfosudis oleivorans (strain DSM 6200 / JCM 39069 / Hxd3) (Desulfococcus oleovorans), this protein is Large ribosomal subunit protein uL5.